The primary structure comprises 205 residues: Allergen Asp f 15 homolog (205 aa).

The protein belongs to the cerato-platanin family.

It is found in the secreted. The protein is Allergen Asp f 15 homolog of Arthroderma benhamiae (strain ATCC MYA-4681 / CBS 112371) (Trichophyton mentagrophytes).